The primary structure comprises 403 residues: Exodeoxyribonuclease 7 large subunit (403 aa).

The protein belongs to the XseA family. As to quaternary structure, heterooligomer composed of large and small subunits.

It localises to the cytoplasm. The catalysed reaction is Exonucleolytic cleavage in either 5'- to 3'- or 3'- to 5'-direction to yield nucleoside 5'-phosphates.. Bidirectionally degrades single-stranded DNA into large acid-insoluble oligonucleotides, which are then degraded further into small acid-soluble oligonucleotides. In Streptomyces griseus subsp. griseus (strain JCM 4626 / CBS 651.72 / NBRC 13350 / KCC S-0626 / ISP 5235), this protein is Exodeoxyribonuclease 7 large subunit.